The primary structure comprises 56 residues: Attractin (56 aa).

Disulfide bonds link Cys4/Cys41, Cys13/Cys33, and Cys20/Cys26. A glycan (N-linked (GlcNAc...) asparagine) is linked at Asn25.

In terms of tissue distribution, produced by the albumen gland of the egg cordons.

It localises to the secreted. Its function is as follows. Water-borne pheromone that attract the marine mollusk Aplysia into breeding aggregations and coordinate male and female reproductive behavior within the aggregation. In Aplysia depilans (Sea hare), this protein is Attractin (ATT).